Consider the following 407-residue polypeptide: 45 kDa calcium-binding protein (407 aa).

The N-terminal stretch at 1 to 35 (MVWSWVAMASRWGPLVGLAPRCLWLLGAVLLMDAS) is a signal peptide. N-linked (GlcNAc...) asparagine glycosylation occurs at Asn-40. EF-hand domains are found at residues 98–133 (RSRR…KTAE) and 137–172 (EAME…SKGH). At Ser-99 the chain carries Phosphoserine. Residues Asp-111, Asn-113, Asp-115, Lys-117, Glu-122, Asp-150, Asp-152, Asp-154, His-156, and Glu-161 each coordinate Ca(2+). 2 positions are modified to phosphothreonine: Thr-193 and Thr-217. The segment covering 249-259 (GSSLAGAPGPG) has biased composition (low complexity). Positions 249–282 (GSSLAGAPGPGDQRQGPGIAGKSGKVLREPQPGC) are disordered. Ca(2+) is bound by residues Asp-291, Asp-293, Asp-295, Gln-297, and Glu-302. EF-hand domains lie at 291-313 (DQDG…TVEN), 323-358 (WVKD…MNEY), and 359-394 (NALN…FTGS). Thr-310 bears the Phosphothreonine mark. The Ca(2+) site is built by Asp-336, Asn-338, and Asp-340. A Phosphothreonine modification is found at Thr-344. Ca(2+) contacts are provided by Glu-347, Asp-372, Asn-374, Asn-376, His-378, and Glu-383. The necessary for intracellular retention in Golgi apparatus lumen stretch occupies residues 354–407 (PMNEYNALNEAKQMIAVADENQNHHLEPEEVLKYSEFFTGSKLVDYARSVHEEF).

It belongs to the CREC family.

The protein localises to the golgi apparatus lumen. Functionally, may regulate calcium-dependent activities in the endoplasmic reticulum lumen or post-ER compartment. This Macaca fascicularis (Crab-eating macaque) protein is 45 kDa calcium-binding protein (SDF4).